A 157-amino-acid polypeptide reads, in one-letter code: Probable succinate transporter subunit YjjB (157 aa).

The next 4 helical transmembrane spans lie at 8-28 (LALA…AMVF), 50-70 (MILM…SMLV), 87-107 (VFTV…TAMI), and 129-149 (FLTA…PGLW).

It belongs to the ThrE exporter (TC 2.A.79) family. In terms of assembly, the transporter is composed of YjjB and YjjP.

Its subcellular location is the cell inner membrane. Functionally, involved in succinate export with YjjP. Both proteins are required for export. This Escherichia coli O127:H6 (strain E2348/69 / EPEC) protein is Probable succinate transporter subunit YjjB.